We begin with the raw amino-acid sequence, 221 residues long: DNA mismatch repair protein MutH (221 aa).

Belongs to the MutH family.

The protein localises to the cytoplasm. Its function is as follows. Sequence-specific endonuclease that cleaves unmethylated GATC sequences. It is involved in DNA mismatch repair. The polypeptide is DNA mismatch repair protein MutH (Vibrio cholerae serotype O1 (strain ATCC 39541 / Classical Ogawa 395 / O395)).